The chain runs to 719 residues: Polyribonucleotide nucleotidyltransferase (719 aa).

Mg(2+) is bound by residues D491 and D497. Positions 558-617 (PRMLTIKINPEKIRDVIGKGGATIRALTEETGTQIDISDDGTIVIASVDETQAKEAQRRI) constitute a KH domain. Positions 627-695 (GQIYDGSVLR…DKGRLRLSIK (69 aa)) constitute an S1 motif domain.

It belongs to the polyribonucleotide nucleotidyltransferase family. Mg(2+) is required as a cofactor.

It is found in the cytoplasm. It catalyses the reaction RNA(n+1) + phosphate = RNA(n) + a ribonucleoside 5'-diphosphate. Involved in mRNA degradation. Catalyzes the phosphorolysis of single-stranded polyribonucleotides processively in the 3'- to 5'-direction. In Bordetella parapertussis (strain 12822 / ATCC BAA-587 / NCTC 13253), this protein is Polyribonucleotide nucleotidyltransferase.